The sequence spans 154 residues: Large ribosomal subunit protein uL13 (154 aa).

It belongs to the universal ribosomal protein uL13 family. Part of the 50S ribosomal subunit.

In terms of biological role, this protein is one of the early assembly proteins of the 50S ribosomal subunit, although it is not seen to bind rRNA by itself. It is important during the early stages of 50S assembly. The protein is Large ribosomal subunit protein uL13 of Rhizobium etli (strain ATCC 51251 / DSM 11541 / JCM 21823 / NBRC 15573 / CFN 42).